Consider the following 149-residue polypeptide: Deoxyuridine 5'-triphosphate nucleotidohydrolase (149 aa).

Substrate is bound by residues 68–70, asparagine 81, 85–87, and methionine 95; these read RSG and LID.

Belongs to the dUTPase family. It depends on Mg(2+) as a cofactor.

The catalysed reaction is dUTP + H2O = dUMP + diphosphate + H(+). It participates in pyrimidine metabolism; dUMP biosynthesis; dUMP from dCTP (dUTP route): step 2/2. This enzyme is involved in nucleotide metabolism: it produces dUMP, the immediate precursor of thymidine nucleotides and it decreases the intracellular concentration of dUTP so that uracil cannot be incorporated into DNA. This is Deoxyuridine 5'-triphosphate nucleotidohydrolase from Polynucleobacter asymbioticus (strain DSM 18221 / CIP 109841 / QLW-P1DMWA-1) (Polynucleobacter necessarius subsp. asymbioticus).